A 414-amino-acid chain; its full sequence is Isocitrate dehydrogenase [NADP] cytoplasmic (414 aa).

The residue at position 2 (Ser2) is an N-acetylserine. Tyr42 carries the post-translational modification Phosphotyrosine. 75 to 77 (TIT) lines the NADP(+) pocket. A substrate-binding site is contributed by Thr77. Lys81 is subject to N6-acetyllysine. Arg82 contributes to the NADP(+) binding site. Substrate is bound by residues 94-100 (SPNGTIR) and Arg109. Lys126 is modified (N6-succinyllysine). Residues Arg132 and Lys212 each contribute to the substrate site. 3 positions are modified to N6-acetyllysine: Lys224, Lys233, and Lys243. A Mn(2+)-binding site is contributed by Asp252. Residue Lys260 participates in NADP(+) binding. Residues Asp275 and Asp279 each coordinate Mn(2+). 310-315 (GTVTRH) contacts NADP(+). Residue Lys321 is modified to N6-acetyllysine. Asn328 provides a ligand contact to NADP(+). Residue Ser389 is modified to Phosphoserine. At Lys400 the chain carries N6-succinyllysine.

This sequence belongs to the isocitrate and isopropylmalate dehydrogenases family. As to quaternary structure, homodimer. Mg(2+) serves as cofactor. It depends on Mn(2+) as a cofactor. The N-terminus is blocked. Post-translationally, acetylation at Lys-374 dramatically reduces catalytic activity. Ubiquitous.

It is found in the cytoplasm. The protein resides in the cytosol. Its subcellular location is the peroxisome. The enzyme catalyses D-threo-isocitrate + NADP(+) = 2-oxoglutarate + CO2 + NADPH. Its function is as follows. Catalyzes the NADP(+)-dependent oxidative decarboxylation of isocitrate (D-threo-isocitrate) to 2-ketoglutarate (2-oxoglutarate), which is required by other enzymes such as the phytanoyl-CoA dioxygenase. Plays a critical role in the generation of NADPH, an important cofactor in many biosynthesis pathways. May act as a corneal epithelial crystallin and may be involved in maintaining corneal epithelial transparency. This Rattus norvegicus (Rat) protein is Isocitrate dehydrogenase [NADP] cytoplasmic (Idh1).